The following is a 252-amino-acid chain: MKFSDPHLLPAGLERSLRFYVTNPSPCPYLPDRKERKAFTNLAIPEADALHNVLSQSGFRRSQSIAYRPACTRCNACKSVRVATREYDISRNDRRVIARNAHLVRRPVAAQATREQFRLLKSYVVTRHDNGGMSDMTYRDYVAMVGGSPVQSLIFEYRDGPEPDAPLVAAAITDVLRDGLSMVYTFFDPAKTSQSLGHYLILDHIRHAHDLGLPHLYLGYWVKGSPKMDYKRRYKPLEVLDGDRWRPLRDDE.

The protein belongs to the R-transferase family. Bpt subfamily.

It is found in the cytoplasm. It carries out the reaction N-terminal L-glutamyl-[protein] + L-leucyl-tRNA(Leu) = N-terminal L-leucyl-L-glutamyl-[protein] + tRNA(Leu) + H(+). It catalyses the reaction N-terminal L-aspartyl-[protein] + L-leucyl-tRNA(Leu) = N-terminal L-leucyl-L-aspartyl-[protein] + tRNA(Leu) + H(+). Functions in the N-end rule pathway of protein degradation where it conjugates Leu from its aminoacyl-tRNA to the N-termini of proteins containing an N-terminal aspartate or glutamate. This chain is Aspartate/glutamate leucyltransferase, found in Hyphomonas neptunium (strain ATCC 15444).